The sequence spans 386 residues: RNA polymerase sigma factor SigA (386 aa).

Positions leucine 154 to threonine 224 are sigma-70 factor domain-2. An Interaction with polymerase core subunit RpoC motif is present at residues aspartate 178–glutamine 181. Positions glutamate 233–tyrosine 309 are sigma-70 factor domain-3. The segment at valine 322–histidine 375 is sigma-70 factor domain-4. Residues leucine 348 to alanine 367 constitute a DNA-binding region (H-T-H motif).

This sequence belongs to the sigma-70 factor family. RpoD/SigA subfamily. Interacts transiently with the RNA polymerase catalytic core.

It is found in the cytoplasm. Functionally, sigma factors are initiation factors that promote the attachment of RNA polymerase to specific initiation sites and are then released. This sigma factor is the primary sigma factor during exponential growth. The polypeptide is RNA polymerase sigma factor SigA (Lactococcus lactis subsp. lactis (strain IL1403) (Streptococcus lactis)).